The following is a 174-amino-acid chain: uncharacterized protein (174 aa).

The segment at V138–R174 is disordered. Over residues T162–R174 the composition is skewed to basic and acidic residues.

This is an uncharacterized protein from Bos taurus (Bovine).